The primary structure comprises 312 residues: tRNA dimethylallyltransferase (312 aa).

10 to 17 (GPTAVGKT) contacts ATP. 12–17 (TAVGKT) lines the substrate pocket. The segment at 35–38 (DSMQ) is interaction with substrate tRNA.

Belongs to the IPP transferase family. Monomer. Mg(2+) serves as cofactor.

The catalysed reaction is adenosine(37) in tRNA + dimethylallyl diphosphate = N(6)-dimethylallyladenosine(37) in tRNA + diphosphate. In terms of biological role, catalyzes the transfer of a dimethylallyl group onto the adenine at position 37 in tRNAs that read codons beginning with uridine, leading to the formation of N6-(dimethylallyl)adenosine (i(6)A). The protein is tRNA dimethylallyltransferase of Alkaliphilus metalliredigens (strain QYMF).